Reading from the N-terminus, the 733-residue chain is MDKIWRELGLTDEEYEKIISILGREPNITEIGMYSVMWSEHCAYKNSKPLLKYLPTKGERVIQGPGENAGVLDIGDNLAVVMKIESHNHPSAIEPYQGAATGVGGIIRDIFTMGARPIALLDSLRFGIPDDKRTKYLIENVVAGIADYGNCIGIPTVGGDTYFEESYKGNPLVNAMCVGIVEKDKIKKGIAKGIGNPVMIVGATTGRDGIGGASFASQELSEESEEKRPSVQVGDPFMEKLLLEACLELFETDAVVAIQDMGAAGLTSSSCEMASRGGVGMEIDLDKVPLREKGMTPYEIMLSESQERMLVVVEKGKEEDVQKVFKKWGLNAATIGKITDDGMIRVIKEGKIVAEVPAKSLAEDAPQYIREEEVPKWQEDVNKLNINEVKPPEDMNKALKDVISSLNVASKEWIYSQYDYMVRTDTAITPGMDAAVVRIKGTKKAIALTTDCNGRYCYLDPYIGSQIAVAEAARNLCMVGAKPIGVTDCLNFGNPEKKEIYWQLKNSIFGIAKACETLQIPVVSGNVSLYNENEEGAIYPTPVIGMAGLIEDVSKICTMDFKKERDVIIILGENKGEIGGSEYLKVCFGMVKGQPPQIDLEEEKRLQELVLKLIEEGLINSSHDISEGGFAAALVESAISGKKGAKISLQTSLREDVELFSESPPRALITVSPEKVEEVLKIAYEYQVPAQKVGVVEGKKIAIEVNGKKIIDLPLEVLEESWRGRIKWEMERN.

Histidine 41 is an active-site residue. Residues tyrosine 44 and lysine 83 each contribute to the ATP site. Glutamate 85 lines the Mg(2+) pocket. Residues 86-89 (SHNH) and arginine 108 contribute to the substrate site. Histidine 87 serves as the catalytic Proton acceptor. Aspartate 109 serves as a coordination point for Mg(2+). The segment at 212–232 (GASFASQELSEESEEKRPSVQ) is disordered. Substrate is bound at residue glutamine 232. Aspartate 260 contributes to the Mg(2+) binding site. 304–306 (ESQ) lines the substrate pocket. 2 residues coordinate ATP: aspartate 488 and glycine 525. Position 526 (asparagine 526) interacts with Mg(2+). Substrate is bound at residue serine 528.

It belongs to the FGAMS family. As to quaternary structure, monomer. Part of the FGAM synthase complex composed of 1 PurL, 1 PurQ and 2 PurS subunits.

The protein resides in the cytoplasm. It catalyses the reaction N(2)-formyl-N(1)-(5-phospho-beta-D-ribosyl)glycinamide + L-glutamine + ATP + H2O = 2-formamido-N(1)-(5-O-phospho-beta-D-ribosyl)acetamidine + L-glutamate + ADP + phosphate + H(+). It participates in purine metabolism; IMP biosynthesis via de novo pathway; 5-amino-1-(5-phospho-D-ribosyl)imidazole from N(2)-formyl-N(1)-(5-phospho-D-ribosyl)glycinamide: step 1/2. Part of the phosphoribosylformylglycinamidine synthase complex involved in the purines biosynthetic pathway. Catalyzes the ATP-dependent conversion of formylglycinamide ribonucleotide (FGAR) and glutamine to yield formylglycinamidine ribonucleotide (FGAM) and glutamate. The FGAM synthase complex is composed of three subunits. PurQ produces an ammonia molecule by converting glutamine to glutamate. PurL transfers the ammonia molecule to FGAR to form FGAM in an ATP-dependent manner. PurS interacts with PurQ and PurL and is thought to assist in the transfer of the ammonia molecule from PurQ to PurL. In Thermoanaerobacter sp. (strain X514), this protein is Phosphoribosylformylglycinamidine synthase subunit PurL.